The chain runs to 432 residues: D-amino acid dehydrogenase (432 aa).

Position 3–17 (3–17 (VVILGSGVVGVTSAW)) interacts with FAD.

The protein belongs to the DadA oxidoreductase family. FAD is required as a cofactor.

The enzyme catalyses a D-alpha-amino acid + A + H2O = a 2-oxocarboxylate + AH2 + NH4(+). Its pathway is amino-acid degradation; D-alanine degradation; NH(3) and pyruvate from D-alanine: step 1/1. Oxidative deamination of D-amino acids. This is D-amino acid dehydrogenase from Escherichia fergusonii (strain ATCC 35469 / DSM 13698 / CCUG 18766 / IAM 14443 / JCM 21226 / LMG 7866 / NBRC 102419 / NCTC 12128 / CDC 0568-73).